The chain runs to 671 residues: Probable boron transporter 6 (671 aa).

Residues 1 to 37 lie on the Cytoplasmic side of the membrane; the sequence is MKSEGESGPFQGILRDIEGRRKCYKQDWIRGIKTGIR. The helical transmembrane segment at 38–58 threads the bilayer; that stretch reads ILAPTCYIFFASSLPVVAFGE. Residues 59-77 are Extracellular-facing; that stretch reads QLSKHTGGALSAVETLAST. Residues 78–98 traverse the membrane as a helical segment; sequence SICGIIHAIFGGQPLLIVGVA. At 99 to 123 the chain is on the cytoplasmic side; that stretch reads EPTIIMYTYLYSFCISRPDIGRELY. A helical transmembrane segment spans residues 124-144; that stretch reads LAWVAWVCVWTSVLLILLSIF. The Extracellular segment spans residues 145 to 157; the sequence is NAGTIITRFTRIA. The helical transmembrane segment at 158–178 threads the bilayer; it reads GELFGMLIAVLFLQEAIKGLI. Topologically, residues 179–195 are cytoplasmic; sequence SEFHAPEIKNQETGKSH. A helical transmembrane segment spans residues 196–216; it reads FLLIYANGLLAVIFSLGLLIT. At 217–235 the chain is on the extracellular side; that stretch reads ALKSRRAKSWKYGFGWLRS. The helical transmembrane segment at 236–256 threads the bilayer; that stretch reads FIGDYGVPLMVLLWTALSYTV. The Cytoplasmic segment spans residues 257 to 291; it reads PSEVLPSVPRRLFCPLPWEPASLYHWTVVKDMGKV. The chain crosses the membrane as a helical span at residues 292–312; it reads PIMYILAAFIPGVMIAGLYFF. Topologically, residues 313-332 are extracellular; it reads DHSVASQMAQQKEFNLKNPS. Residues 333–353 traverse the membrane as a helical segment; it reads AYHYDIFLLGIITLICGLLGL. Topologically, residues 354-469 are cytoplasmic; that stretch reads PPSNGVLPQA…EQRVSNLLQS (116 aa). Residues 470–490 form a helical membrane-spanning segment; that stretch reads VLVGLTLLAVTVIKMIPSSVL. The Extracellular portion of the chain corresponds to 491–557; the sequence is WGYFAYMAID…QLVYFLLCYG (67 aa). A helical transmembrane segment spans residues 558 to 578; that stretch reads MTWIPMAGIFFPALFFLLISI. Over 579–671 the chain is Cytoplasmic; the sequence is REHLLPKLFD…EEKHVTFEPH (93 aa).

Belongs to the anion exchanger (TC 2.A.31.3) family.

It is found in the membrane. Probable boron transporter. Boron is essential for maintaining the integrity of plants cell walls. In Arabidopsis thaliana (Mouse-ear cress), this protein is Probable boron transporter 6 (BOR6).